The primary structure comprises 945 residues: Valine--tRNA ligase (945 aa).

The 'HIGH' region motif lies at 42 to 52 (PNVTGTLHMGH). The short motif at 552–556 (KMSKS) is the 'KMSKS' region element. Residue K555 coordinates ATP. Residues 879–945 (DKATETARLS…VQTQLSKLKD (67 aa)) are a coiled coil.

It belongs to the class-I aminoacyl-tRNA synthetase family. ValS type 1 subfamily. In terms of assembly, monomer.

The protein resides in the cytoplasm. It catalyses the reaction tRNA(Val) + L-valine + ATP = L-valyl-tRNA(Val) + AMP + diphosphate. Functionally, catalyzes the attachment of valine to tRNA(Val). As ValRS can inadvertently accommodate and process structurally similar amino acids such as threonine, to avoid such errors, it has a 'posttransfer' editing activity that hydrolyzes mischarged Thr-tRNA(Val) in a tRNA-dependent manner. The protein is Valine--tRNA ligase of Neisseria meningitidis serogroup A / serotype 4A (strain DSM 15465 / Z2491).